The following is a 97-amino-acid chain: Putative CC-type chemokine U83 (97 aa).

2 cysteine pairs are disulfide-bonded: C32/C62 and C33/C76.

Belongs to the intercrine beta (chemokine CC) family. Highly divergent.

The sequence is that of Putative CC-type chemokine U83 (U83) from Human herpesvirus 6A (strain Uganda-1102) (HHV-6 variant A).